The primary structure comprises 355 residues: 3-dehydroquinate synthase (355 aa).

Residues 98–102 (GVIGD), 122–123 (TT), Lys-135, Lys-144, and 162–165 (TLNT) contribute to the NAD(+) site. Glu-177, His-240, and His-257 together coordinate Zn(2+).

Belongs to the sugar phosphate cyclases superfamily. Dehydroquinate synthase family. Co(2+) serves as cofactor. Zn(2+) is required as a cofactor. Requires NAD(+) as cofactor.

The protein resides in the cytoplasm. It catalyses the reaction 7-phospho-2-dehydro-3-deoxy-D-arabino-heptonate = 3-dehydroquinate + phosphate. It participates in metabolic intermediate biosynthesis; chorismate biosynthesis; chorismate from D-erythrose 4-phosphate and phosphoenolpyruvate: step 2/7. Its function is as follows. Catalyzes the conversion of 3-deoxy-D-arabino-heptulosonate 7-phosphate (DAHP) to dehydroquinate (DHQ). This is 3-dehydroquinate synthase from Dictyoglomus thermophilum (strain ATCC 35947 / DSM 3960 / H-6-12).